The following is a 299-amino-acid chain: Pyridoxal 5'-phosphate synthase subunit PdxS (299 aa).

Position 24 (Asp-24) interacts with D-ribose 5-phosphate. Lys-81 (schiff-base intermediate with D-ribose 5-phosphate) is an active-site residue. Gly-153 serves as a coordination point for D-ribose 5-phosphate. Arg-165 contributes to the D-glyceraldehyde 3-phosphate binding site. Residues Gly-219 and 240 to 241 contribute to the D-ribose 5-phosphate site; that span reads GS.

It belongs to the PdxS/SNZ family. In the presence of PdxT, forms a dodecamer of heterodimers.

It catalyses the reaction aldehydo-D-ribose 5-phosphate + D-glyceraldehyde 3-phosphate + L-glutamine = pyridoxal 5'-phosphate + L-glutamate + phosphate + 3 H2O + H(+). It participates in cofactor biosynthesis; pyridoxal 5'-phosphate biosynthesis. In terms of biological role, catalyzes the formation of pyridoxal 5'-phosphate from ribose 5-phosphate (RBP), glyceraldehyde 3-phosphate (G3P) and ammonia. The ammonia is provided by the PdxT subunit. Can also use ribulose 5-phosphate and dihydroxyacetone phosphate as substrates, resulting from enzyme-catalyzed isomerization of RBP and G3P, respectively. The polypeptide is Pyridoxal 5'-phosphate synthase subunit PdxS (Methanococcus maripaludis (strain DSM 14266 / JCM 13030 / NBRC 101832 / S2 / LL)).